Here is a 554-residue protein sequence, read N- to C-terminus: 3-(3-hydroxy-phenyl)propionate/3-hydroxycinnamic acid hydroxylase (554 aa).

FAD is bound by residues 17 to 46 (QVAIAGAGPVGLMMANYLGQMGIDVLVVEK) and 285 to 295 (FRIDRVLLAGD).

It belongs to the PheA/TfdB FAD monooxygenase family. It depends on FAD as a cofactor.

It carries out the reaction 3-(3-hydroxyphenyl)propanoate + NADH + O2 + H(+) = 3-(2,3-dihydroxyphenyl)propanoate + NAD(+) + H2O. The catalysed reaction is (2E)-3-(3-hydroxyphenyl)prop-2-enoate + NADH + O2 + H(+) = (2E)-3-(2,3-dihydroxyphenyl)prop-2-enoate + NAD(+) + H2O. Its pathway is aromatic compound metabolism; 3-phenylpropanoate degradation. Its function is as follows. Catalyzes the insertion of one atom of molecular oxygen into position 2 of the phenyl ring of 3-(3-hydroxyphenyl)propionate (3-HPP) and hydroxycinnamic acid (3HCI). The sequence is that of 3-(3-hydroxy-phenyl)propionate/3-hydroxycinnamic acid hydroxylase from Escherichia coli O17:K52:H18 (strain UMN026 / ExPEC).